A 541-amino-acid chain; its full sequence is Arginine--tRNA ligase (541 aa).

Residues 119–129 carry the 'HIGH' region motif; sequence ANPTGPLHIGH.

Belongs to the class-I aminoacyl-tRNA synthetase family. Monomer.

The protein localises to the cytoplasm. The enzyme catalyses tRNA(Arg) + L-arginine + ATP = L-arginyl-tRNA(Arg) + AMP + diphosphate. In Helicobacter pylori (strain HPAG1), this protein is Arginine--tRNA ligase.